The primary structure comprises 467 residues: Putative gluconeogenesis factor (467 aa).

The span at 1 to 12 (MSAPPAPPPDRS) shows a compositional bias: pro residues. The disordered stretch occupies residues 1–27 (MSAPPAPPPDRSAPPDRTDSAQTEPTR).

This sequence belongs to the gluconeogenesis factor family.

It localises to the cytoplasm. Its function is as follows. Required for morphogenesis under gluconeogenic growth conditions. This chain is Putative gluconeogenesis factor, found in Deinococcus radiodurans (strain ATCC 13939 / DSM 20539 / JCM 16871 / CCUG 27074 / LMG 4051 / NBRC 15346 / NCIMB 9279 / VKM B-1422 / R1).